Here is a 733-residue protein sequence, read N- to C-terminus: Polyribonucleotide nucleotidyltransferase (733 aa).

The tract at residues 404–424 is disordered; sequence NYNMPPYSTGETGRVGSPKRR. Mg(2+)-binding residues include D516 and D522. Residues 582–641 form the KH domain; that stretch reads PRIITVHIPVDKIGEVIGPKGKMINQIQDDTGANISIEDDGTIFIGADNGDSAESARSMI. In terms of domain architecture, S1 motif spans 653–725; that stretch reads GERYLGTVVK…DRGKLSLVLA (73 aa).

This sequence belongs to the polyribonucleotide nucleotidyltransferase family. Requires Mg(2+) as cofactor.

The protein localises to the cytoplasm. It catalyses the reaction RNA(n+1) + phosphate = RNA(n) + a ribonucleoside 5'-diphosphate. Functionally, involved in mRNA degradation. Catalyzes the phosphorolysis of single-stranded polyribonucleotides processively in the 3'- to 5'-direction. The polypeptide is Polyribonucleotide nucleotidyltransferase (Cutibacterium acnes (strain DSM 16379 / KPA171202) (Propionibacterium acnes)).